The primary structure comprises 226 residues: Staphylococcal superantigen-like 1 (226 aa).

The signal sequence occupies residues 1-30; that stretch reads MKFKAIAKASLALGMLATGVITSNVQSVQA.

Belongs to the staphylococcal/streptococcal toxin family. Homodimer.

The protein localises to the secreted. In terms of biological role, mediates virulence by proteolytically cleaving host proteins, including collagens types I and IV as well as human cytokines IL8, IL17A, and IFN-gamma. In Staphylococcus aureus (strain NCTC 8325 / PS 47), this protein is Staphylococcal superantigen-like 1.